The chain runs to 140 residues: Large ribosomal subunit protein bL17 (140 aa).

A compositionally biased stretch (basic and acidic residues) spans Asp119–Glu133. Residues Asp119–Glu140 form a disordered region.

This sequence belongs to the bacterial ribosomal protein bL17 family. In terms of assembly, part of the 50S ribosomal subunit. Contacts protein L32.

The chain is Large ribosomal subunit protein bL17 from Maricaulis maris (strain MCS10) (Caulobacter maris).